A 167-amino-acid polypeptide reads, in one-letter code: Interferon gamma (167 aa).

The first 23 residues, 1–23 (MNYTGYLLAFQLCIILGSSSCYC), serve as a signal peptide directing secretion. Position 24 is a pyrrolidone carboxylic acid (Gln-24). N-linked (GlcNAc...) asparagine glycosylation is found at Asn-39 and Asn-105. The segment at 148-167 (SNLRKRKRSQSTFHGRRASI) is disordered. The span at 149 to 167 (NLRKRKRSQSTFHGRRASI) shows a compositional bias: basic residues.

It belongs to the type II (or gamma) interferon family. In terms of assembly, homodimer. Interacts with IFNGR1 (via extracellular domain); this interaction promotes IFNGR1 dimerization. In terms of tissue distribution, released primarily from activated T lymphocytes.

It localises to the secreted. Its function is as follows. Type II interferon produced by immune cells such as T-cells and NK cells that plays crucial roles in antimicrobial, antiviral, and antitumor responses by activating effector immune cells and enhancing antigen presentation. Primarily signals through the JAK-STAT pathway after interaction with its receptor IFNGR1 to affect gene regulation. Upon IFNG binding, IFNGR1 intracellular domain opens out to allow association of downstream signaling components JAK2, JAK1 and STAT1, leading to STAT1 activation, nuclear translocation and transcription of IFNG-regulated genes. Many of the induced genes are transcription factors such as IRF1 that are able to further drive regulation of a next wave of transcription. Plays a role in class I antigen presentation pathway by inducing a replacement of catalytic proteasome subunits with immunoproteasome subunits. In turn, increases the quantity, quality, and repertoire of peptides for class I MHC loading. Increases the efficiency of peptide generation also by inducing the expression of activator PA28 that associates with the proteasome and alters its proteolytic cleavage preference. Up-regulates as well MHC II complexes on the cell surface by promoting expression of several key molecules such as cathepsins B/CTSB, H/CTSH, and L/CTSL. Participates in the regulation of hematopoietic stem cells during development and under homeostatic conditions by affecting their development, quiescence, and differentiation. This chain is Interferon gamma (IFNG), found in Dasypus novemcinctus (Nine-banded armadillo).